The following is a 346-amino-acid chain: Ornithine carbamoyltransferase, catabolic (346 aa).

Carbamoyl phosphate-binding positions include 58–61, asparagine 85, arginine 109, and 136–139; these read STRT and HPTQ. L-ornithine is bound by residues asparagine 168, aspartate 239, and 243-244; that span reads SL. Residues 280 to 281 and arginine 332 each bind carbamoyl phosphate; that span reads CL.

It belongs to the aspartate/ornithine carbamoyltransferase superfamily. OTCase family.

The protein localises to the cytoplasm. It catalyses the reaction carbamoyl phosphate + L-ornithine = L-citrulline + phosphate + H(+). It participates in amino-acid degradation; L-arginine degradation via ADI pathway; carbamoyl phosphate from L-arginine: step 2/2. Its function is as follows. Reversibly catalyzes the transfer of the carbamoyl group from carbamoyl phosphate (CP) to the N(epsilon) atom of ornithine (ORN) to produce L-citrulline. The protein is Ornithine carbamoyltransferase, catabolic of Mycoplasma pneumoniae (strain ATCC 29342 / M129 / Subtype 1) (Mycoplasmoides pneumoniae).